A 279-amino-acid polypeptide reads, in one-letter code: Proteasome subunit beta (279 aa).

A propeptide spans 1–53 (MSGTAEFPGRIPAPYLEVGSSSFVELLGSVAPELLPGRRPLPPGDMGDAAPHG) (removed in mature form; by autocatalysis). Thr-54 serves as the catalytic Nucleophile.

It belongs to the peptidase T1B family. As to quaternary structure, the 20S proteasome core is composed of 14 alpha and 14 beta subunits that assemble into four stacked heptameric rings, resulting in a barrel-shaped structure. The two inner rings, each composed of seven catalytic beta subunits, are sandwiched by two outer rings, each composed of seven alpha subunits. The catalytic chamber with the active sites is on the inside of the barrel. Has a gated structure, the ends of the cylinder being occluded by the N-termini of the alpha-subunits. Is capped by the proteasome-associated ATPase, ARC.

It localises to the cytoplasm. The enzyme catalyses Cleavage of peptide bonds with very broad specificity.. It participates in protein degradation; proteasomal Pup-dependent pathway. Its activity is regulated as follows. The formation of the proteasomal ATPase ARC-20S proteasome complex, likely via the docking of the C-termini of ARC into the intersubunit pockets in the alpha-rings, may trigger opening of the gate for substrate entry. Interconversion between the open-gate and close-gate conformations leads to a dynamic regulation of the 20S proteasome proteolysis activity. Functionally, component of the proteasome core, a large protease complex with broad specificity involved in protein degradation. This Stackebrandtia nassauensis (strain DSM 44728 / CIP 108903 / NRRL B-16338 / NBRC 102104 / LLR-40K-21) protein is Proteasome subunit beta.